Here is a 403-residue protein sequence, read N- to C-terminus: Pyruvate, phosphate dikinase regulatory protein 1, chloroplastic (403 aa).

The transit peptide at 1–86 (MALLSAMKLQ…NTTGPMRPIE (86 aa)) directs the protein to the chloroplast. The segment at 1–108 (MALLSAMKLQ…DVSSSSNGVS (108 aa)) is disordered. 3 stretches are compositionally biased toward low complexity: residues 17-26 (SSNLNPNSKP), 69-80 (STITNGSNNTTG), and 87-108 (SSSR…NGVS). An ADP-binding site is contributed by 269–276 (GVSRTGKT).

It belongs to the pyruvate, phosphate/water dikinase regulatory protein family. PDRP subfamily. As to quaternary structure, interacts with PPDK1. Expressed in green tissues.

The protein resides in the plastid. The protein localises to the chloroplast stroma. The enzyme catalyses N(tele)-phospho-L-histidyl/L-threonyl-[pyruvate, phosphate dikinase] + ADP = N(tele)-phospho-L-histidyl/O-phospho-L-threonyl-[pyruvate, phosphate dikinase] + AMP + H(+). It catalyses the reaction N(tele)-phospho-L-histidyl/O-phospho-L-threonyl-[pyruvate, phosphate dikinase] + phosphate + H(+) = N(tele)-phospho-L-histidyl/L-threonyl-[pyruvate, phosphate dikinase] + diphosphate. Regulated by light/dark exposure. Bifunctional serine/threonine kinase and phosphorylase involved in the dark/light-mediated regulation of PPDK by catalyzing its phosphorylation/dephosphorylation. Dark/light-induced changes in stromal concentrations of the competing ADP and Pi substrates govern the direction of the reaction. In the dark, phosphorylates the catalytic intermediate of PPDK (PPDK-HisP), inactivating it. Light exposure induces the phosphorolysis reaction that reactivates PPDK. Unlike the kinase function which can utilize either Thr or Ser as target, the phosphorylase function has a strict substrate requirement for threonyl phosphate. The polypeptide is Pyruvate, phosphate dikinase regulatory protein 1, chloroplastic (RP1) (Arabidopsis thaliana (Mouse-ear cress)).